The chain runs to 98 residues: MSPAVLNITMAFTFSLLGTLMFRSHLMSTLLCLEGMMLSLFMLATITPLNTHSMIMFPIPIAILVFAACEAAVGLALLAKISNTYGSDFVQNLNLLQC.

3 consecutive transmembrane segments (helical) span residues 2–22 (SPAV…TLMF), 26–46 (LMST…LATI), and 59–79 (IPIA…ALLA).

The protein belongs to the complex I subunit 4L family. Core subunit of respiratory chain NADH dehydrogenase (Complex I) which is composed of 45 different subunits.

The protein resides in the mitochondrion inner membrane. It catalyses the reaction a ubiquinone + NADH + 5 H(+)(in) = a ubiquinol + NAD(+) + 4 H(+)(out). Core subunit of the mitochondrial membrane respiratory chain NADH dehydrogenase (Complex I) which catalyzes electron transfer from NADH through the respiratory chain, using ubiquinone as an electron acceptor. Part of the enzyme membrane arm which is embedded in the lipid bilayer and involved in proton translocation. The chain is NADH-ubiquinone oxidoreductase chain 4L (MT-ND4L) from Alexandromys kikuchii (Taiwan vole).